The following is a 386-amino-acid chain: GTPase Obg (386 aa).

Positions 1-159 (MKFIDEARIE…RTLKLELKVL (159 aa)) constitute an Obg domain. An OBG-type G domain is found at 160–348 (ADVGLLGMPN…LTFAIMSYLD (189 aa)). GTP contacts are provided by residues 166-173 (GMPNAGKS), 191-195 (FTTLH), 213-216 (DIPG), 284-287 (NKVD), and 329-331 (SAL). Positions 173 and 193 each coordinate Mg(2+).

It belongs to the TRAFAC class OBG-HflX-like GTPase superfamily. OBG GTPase family. In terms of assembly, monomer. Mg(2+) serves as cofactor.

The protein localises to the cytoplasm. Functionally, an essential GTPase which binds GTP, GDP and possibly (p)ppGpp with moderate affinity, with high nucleotide exchange rates and a fairly low GTP hydrolysis rate. Plays a role in control of the cell cycle, stress response, ribosome biogenesis and in those bacteria that undergo differentiation, in morphogenesis control. This is GTPase Obg from Chromobacterium violaceum (strain ATCC 12472 / DSM 30191 / JCM 1249 / CCUG 213 / NBRC 12614 / NCIMB 9131 / NCTC 9757 / MK).